The chain runs to 970 residues: MLRLRLSPTFSVGFHLLAFVPLLFSHVDLISADTEMEGEGNETGECTGSYYCKKGVILPIWEPQDPSFGDKIARATVYFVAMVYMFLGVSIIADRFMSSIEVITSQEKEITIKKPNGETTKTTVRIWNETVSNLTLMALGSSAPEILLSVIEVCGHNFTAGDLGPSTIVGSAAFNMFIIIALCVYVVPDGETRKIKHLRVFFVTAAWSIFAYTWLYIILSVISPGVVEVWEGLLTFFFFPICVVFAWVADRRLLFYKYVYKRYRAGKQRGMIIEHEGDRPSSKTEIEMDGKVVNSHVDNFLDGALVLEVDERDQDDEEARREMARILKELKQKHPEKEIEQLIELANYQVLSQQQKSRAFYRIQATRLMTGAGNILKRHAADQARKAVSMHEVNTEVAENDPVSKIFFEQGTYQCLENCGTVALTILRRGGDLTNTVFVDFRTEDGTANAGSDYEFTEGTVVFKPGETQKEIRVGIIDDDIFEEDENFLVHLSNVKVSSEASEDGILEANHVSTLACLGSPSTATVTIFDDDHAGIFTFEEPVTHVSESIGIMEVKVLRTSGARGNVIVPYKTIEGTARGGGEDFEDTCGELEFQNDEIVKTISVKVIDDEEYEKNKTFFLEIGEPRLVEMSEKKALLLNELGGFTITGKYLYGQPVFRKVHAREHPIPSTVITIAEECDAKQPLTSKEEEERRIAEMGRPILGEHTKLEVIIEESYEFKSTVDKLIKKTNLALVVGTNSWREQFIEAITVSAGEDDDDDECGEEKLPSCFDYVMHFLTVFWKVLFAFVPPTEYWNGWACFIVSILMIGILTAFIGDLASHFGCTIGLKDSVTAVVFVALGTSVPDTFASKVAATQDQYADASIGNVTGSNAVNVFLGIGVAWSIAAIYHAANGEQFKVSPGTLAFSVTLFTIFAFINVGVLLYRRRPEIGGELGGPRTAKLLTSCLFVLLWLLYIFFSSLEAYCHIKGF.

An N-terminal signal peptide occupies residues 1–32 (MLRLRLSPTFSVGFHLLAFVPLLFSHVDLISA). The Extracellular segment spans residues 33–71 (DTEMEGEGNETGECTGSYYCKKGVILPIWEPQDPSFGDK). Asparagine 41 carries an N-linked (GlcNAc...) asparagine glycan. Residues 72–92 (IARATVYFVAMVYMFLGVSII) traverse the membrane as a helical segment. The Cytoplasmic segment spans residues 93–133 (ADRFMSSIEVITSQEKEITIKKPNGETTKTTVRIWNETVSN). A helical transmembrane segment spans residues 134–154 (LTLMALGSSAPEILLSVIEVC). An Alpha-1 repeat occupies 138-178 (ALGSSAPEILLSVIEVCGHNFTAGDLGPSTIVGSAAFNMFI). Over 155–167 (GHNFTAGDLGPST) the chain is Extracellular. N-linked (GlcNAc...) asparagine glycosylation occurs at asparagine 157. A helical transmembrane segment spans residues 168 to 188 (IVGSAAFNMFIIIALCVYVVP). The Cytoplasmic portion of the chain corresponds to 189 to 201 (DGETRKIKHLRVF). Residues 202 to 222 (FVTAAWSIFAYTWLYIILSVI) form a helical membrane-spanning segment. Residues 223 to 228 (SPGVVE) are Extracellular-facing. Residues 229 to 249 (VWEGLLTFFFFPICVVFAWVA) traverse the membrane as a helical segment. Over 250-797 (DRRLLFYKYV…FVPPTEYWNG (548 aa)) the chain is Cytoplasmic. The putative calmodulin-binding region stretch occupies residues 251-270 (RRLLFYKYVYKRYRAGKQRG). Serine 282 and serine 389 each carry phosphoserine. 2 Calx-beta domains span residues 393–493 (VNTE…VHLS) and 524–624 (ATVT…LEIG). Ca(2+) contacts are provided by glutamate 417, aspartate 453, aspartate 478, aspartate 479, isoleucine 481, glutamate 483, glutamate 486, aspartate 530, aspartate 531, aspartate 532, glutamate 548, aspartate 584, aspartate 610, glutamate 611, glutamate 612, and glutamate 715. Residues 798-818 (WACFIVSILMIGILTAFIGDL) traverse the membrane as a helical segment. Residues 819-821 (ASH) are Extracellular-facing. Residues 822–842 (FGCTIGLKDSVTAVVFVALGT) form a helical membrane-spanning segment. An Alpha-2 repeat occupies 839-875 (ALGTSVPDTFASKVAATQDQYADASIGNVTGSNAVNV). The Cytoplasmic portion of the chain corresponds to 843–871 (SVPDTFASKVAATQDQYADASIGNVTGSN). A helical membrane pass occupies residues 872 to 892 (AVNVFLGIGVAWSIAAIYHAA). Residues 893–903 (NGEQFKVSPGT) lie on the Extracellular side of the membrane. The chain crosses the membrane as a helical span at residues 904-924 (LAFSVTLFTIFAFINVGVLLY). Residues 925-941 (RRRPEIGGELGGPRTAK) lie on the Cytoplasmic side of the membrane. The chain crosses the membrane as a helical span at residues 942–962 (LLTSCLFVLLWLLYIFFSSLE). The Extracellular portion of the chain corresponds to 963–970 (AYCHIKGF).

It belongs to the Ca(2+):cation antiporter (CaCA) (TC 2.A.19) family. SLC8 subfamily. In terms of tissue distribution, detected in heart (at protein level). Detected in heart.

The protein localises to the cell membrane. It catalyses the reaction Ca(2+)(in) + 3 Na(+)(out) = Ca(2+)(out) + 3 Na(+)(in). Its activity is regulated as follows. Activated by micromolar levels of Ca(2+). In terms of biological role, mediates the exchange of one Ca(2+) ion against three to four Na(+) ions across the cell membrane, and thereby contributes to the regulation of cytoplasmic Ca(2+) levels and Ca(2+)-dependent cellular processes. Contributes to Ca(2+) transport during excitation-contraction coupling in muscle. In a first phase, voltage-gated channels mediate the rapid increase of cytoplasmic Ca(2+) levels due to release of Ca(2+) stores from the endoplasmic reticulum. SLC8A1 mediates the export of Ca(2+) from the cell during the next phase, so that cytoplasmic Ca(2+) levels rapidly return to baseline. Required for normal embryonic heart development and the onset of heart contractions. The sequence is that of Sodium/calcium exchanger 1 (SLC8A1) from Felis catus (Cat).